We begin with the raw amino-acid sequence, 261 residues long: Ribosomal RNA small subunit methyltransferase J (261 aa).

Residues 111-112, 127-128, 163-164, and Asp181 contribute to the S-adenosyl-L-methionine site; these read RD, ER, and SS.

It belongs to the methyltransferase superfamily. RsmJ family.

Its subcellular location is the cytoplasm. It catalyses the reaction guanosine(1516) in 16S rRNA + S-adenosyl-L-methionine = N(2)-methylguanosine(1516) in 16S rRNA + S-adenosyl-L-homocysteine + H(+). Functionally, specifically methylates the guanosine in position 1516 of 16S rRNA. The polypeptide is Ribosomal RNA small subunit methyltransferase J (Shewanella sp. (strain MR-7)).